Here is a 210-residue protein sequence, read N- to C-terminus: Guanylate kinase (210 aa).

The 179-residue stretch at 6-184 (GTLYIISAPS…ALQDLKCIIQ (179 aa)) folds into the Guanylate kinase-like domain. 13 to 20 (APSGAGKT) provides a ligand contact to ATP.

Belongs to the guanylate kinase family.

The protein resides in the cytoplasm. The catalysed reaction is GMP + ATP = GDP + ADP. In terms of biological role, essential for recycling GMP and indirectly, cGMP. The protein is Guanylate kinase of Nitrosospira multiformis (strain ATCC 25196 / NCIMB 11849 / C 71).